The chain runs to 217 residues: Large ribosomal subunit protein uL3 (217 aa).

Over residues 134-146 (GRATHGNSRSHNV) the composition is skewed to polar residues. Residues 134-154 (GRATHGNSRSHNVPGSIGMAQ) are disordered. Gln154 is modified (N5-methylglutamine).

It belongs to the universal ribosomal protein uL3 family. As to quaternary structure, part of the 50S ribosomal subunit. Forms a cluster with proteins L14 and L19. In terms of processing, methylated by PrmB.

Its function is as follows. One of the primary rRNA binding proteins, it binds directly near the 3'-end of the 23S rRNA, where it nucleates assembly of the 50S subunit. The polypeptide is Large ribosomal subunit protein uL3 (Burkholderia cenocepacia (strain HI2424)).